The primary structure comprises 571 residues: External alternative NAD(P)H-ubiquinone oxidoreductase B1, mitochondrial (571 aa).

The N-terminal 35 residues, 1-35 (MTLLSSLGRASRSAPLASKLLLLGTLSGGSIVAYA), are a transit peptide targeting the mitochondrion. Position 51 to 81 (51 to 81 (KVVVLGTGWAGISFLKDLDITSYDVQVVSPQ)) interacts with FAD. Residue 215–251 (LHFVIVGGGPTGVEFAAELHDFIIEDITKIYPSVKEL) coordinates NAD(+). An EF-hand domain is found at 372 to 407 (KILGDIANIFKAADADNSGTLTMEELEGVVDDIIVR). Ca(2+) is bound by residues aspartate 385, aspartate 387, serine 389, threonine 391, and glutamate 396. A Microbody targeting signal motif is present at residues 562-571 (YIFGRDSSRI).

The protein belongs to the NADH dehydrogenase family. FAD is required as a cofactor. As to expression, expressed in seedlings, roots, cotyledons, leaves, stems, buds and flowers.

The protein localises to the mitochondrion inner membrane. The protein resides in the peroxisome. The enzyme catalyses a quinone + NADH + H(+) = a quinol + NAD(+). The catalysed reaction is a ubiquinone + NADH + H(+) = a ubiquinol + NAD(+). Activity is calcium-dependent with a more pronounced effect at higher pH. In terms of biological role, alternative NADH-ubiquinone oxidoreductase which catalyzes the oxidation of mitochondrial NADH does not translocate protons across the inner mitochondrial membrane. Calcium-dependent NAD(P)H dehydrogenase. Binds calcium ions. In Arabidopsis thaliana (Mouse-ear cress), this protein is External alternative NAD(P)H-ubiquinone oxidoreductase B1, mitochondrial (NDB1).